The sequence spans 130 residues: S-adenosylmethionine decarboxylase proenzyme (130 aa).

The active-site Schiff-base intermediate with substrate; via pyruvic acid is the S63. A Pyruvic acid (Ser); by autocatalysis modification is found at S63. H68 (proton acceptor; for processing activity) is an active-site residue. C83 (proton donor; for catalytic activity) is an active-site residue.

It belongs to the prokaryotic AdoMetDC family. Type 1 subfamily. In terms of assembly, heterotetramer of two alpha and two beta chains arranged as a dimer of alpha/beta heterodimers. The cofactor is pyruvate. Post-translationally, is synthesized initially as an inactive proenzyme. Formation of the active enzyme involves a self-maturation process in which the active site pyruvoyl group is generated from an internal serine residue via an autocatalytic post-translational modification. Two non-identical subunits are generated from the proenzyme in this reaction, and the pyruvate is formed at the N-terminus of the alpha chain, which is derived from the carboxyl end of the proenzyme. The post-translation cleavage follows an unusual pathway, termed non-hydrolytic serinolysis, in which the side chain hydroxyl group of the serine supplies its oxygen atom to form the C-terminus of the beta chain, while the remainder of the serine residue undergoes an oxidative deamination to produce ammonia and the pyruvoyl group blocking the N-terminus of the alpha chain.

It carries out the reaction S-adenosyl-L-methionine + H(+) = S-adenosyl 3-(methylsulfanyl)propylamine + CO2. It functions in the pathway amine and polyamine biosynthesis; S-adenosylmethioninamine biosynthesis; S-adenosylmethioninamine from S-adenosyl-L-methionine: step 1/1. Catalyzes the decarboxylation of S-adenosylmethionine to S-adenosylmethioninamine (dcAdoMet), the propylamine donor required for the synthesis of the polyamines spermine and spermidine from the diamine putrescine. The protein is S-adenosylmethionine decarboxylase proenzyme (speH) of Thermotoga maritima (strain ATCC 43589 / DSM 3109 / JCM 10099 / NBRC 100826 / MSB8).